A 93-amino-acid chain; its full sequence is Small ribosomal subunit protein uS19 (93 aa).

The protein belongs to the universal ribosomal protein uS19 family.

Functionally, protein S19 forms a complex with S13 that binds strongly to the 16S ribosomal RNA. This Nautilia profundicola (strain ATCC BAA-1463 / DSM 18972 / AmH) protein is Small ribosomal subunit protein uS19.